A 561-amino-acid polypeptide reads, in one-letter code: AT-rich interactive domain-containing protein 3B (561 aa).

Residue methionine 1 is modified to N-acetylmethionine. Residues 1–17 (MEPLQQQQQQQQQQQKQ) show a composition bias toward low complexity. Disordered regions lie at residues 1–36 (MEPL…QQMR), 53–122 (LSAT…SKYF), and 136–179 (PMSN…WNLD). Serine 89 is subject to Phosphoserine. Acidic residues predominate over residues 90–109 (EPEEEDGGLEDEDGDDEVAE). A compositionally biased stretch (basic and acidic residues) spans 152–162 (QAKEDHTKDAS). The span at 164 to 178 (ASPSVSTAGQPNWNL) shows a compositional bias: polar residues. Serine 165 carries the phosphoserine modification. The segment at 203–365 (SRDFAKLYEL…SPPKIRFPIL (163 aa)) is interaction with RB1. The ARID domain maps to 215–307 (DPERKEFLDD…YLYAYECEKK (93 aa)). Serine 311 is modified (phosphoserine). Residue arginine 361 is modified to Asymmetric dimethylarginine. Residues 370-397 (SSGTNTSSPRISPATTLRKGDGAPVTTV) form a disordered region. The REKLES domain maps to 419–517 (AALEQLRERL…GVLFAQKPVV (99 aa)). An interaction with ARID3A region spans residues 490–513 (SSIGSINMSVDIDGTTYAGVLFAQ). Residues 523-552 (SAPQSLGSSASSSSSSHCSPSPTSSRGTPS) show a composition bias toward low complexity. Positions 523–561 (SAPQSLGSSASSSSSSHCSPSPTSSRGTPSAEPSTSWSL) are disordered.

In terms of assembly, heterodimer with ARID3A. Interacts with unphosphorylated RB1. Expressed in placenta, testis and leukocytes. Expressed in neuroblastoma. Present in K-562 erythrocytic leukemia cell line (at protein level).

It is found in the nucleus. Transcription factor which may be involved in neuroblastoma growth and malignant transformation. Favors nuclear targeting of ARID3A. The polypeptide is AT-rich interactive domain-containing protein 3B (ARID3B) (Homo sapiens (Human)).